The primary structure comprises 560 residues: 2-hydroxyacyl-CoA lyase (560 aa).

Glu49 contributes to the thiamine diphosphate binding site. Asp446 and Asn473 together coordinate Mg(2+). A Peroxisomal target signal 1 (PTS1) motif is present at residues 558-560 (PRL).

It belongs to the TPP enzyme family. Requires Mg(2+) as cofactor. Thiamine diphosphate is required as a cofactor.

The protein localises to the cytoplasm. Its subcellular location is the peroxisome matrix. It carries out the reaction an (R)-2-hydroxy-long-chain-fatty acyl-CoA = a long-chain fatty aldehyde + formyl-CoA. It catalyses the reaction a 2-hydroxy-3-methyl fatty acyl-CoA = a 2-methyl-branched fatty aldehyde + formyl-CoA. Functionally, catalyzes a carbon-carbon cleavage reaction; cleaves a 2-hydroxy-3-methylacyl-CoA into formyl-CoA and a 2-methyl-branched fatty aldehyde. This Saccharomyces cerevisiae (strain ATCC 204508 / S288c) (Baker's yeast) protein is 2-hydroxyacyl-CoA lyase.